The primary structure comprises 706 residues: Polyribonucleotide nucleotidyltransferase (706 aa).

Residues aspartate 483 and aspartate 489 each coordinate Mg(2+). The 60-residue stretch at 550 to 609 folds into the KH domain; it reads PRITTIWVKTDKIRDVIGTGGKNIRNITETTGVTVDIEDTGRINIASTSKEACDLAIQMI. The region spanning 619–687 is the S1 motif domain; it reads GKLYMGIVKK…KNGKVKLSRK (69 aa).

The protein belongs to the polyribonucleotide nucleotidyltransferase family. The cofactor is Mg(2+).

It is found in the cytoplasm. It catalyses the reaction RNA(n+1) + phosphate = RNA(n) + a ribonucleoside 5'-diphosphate. Its function is as follows. Involved in mRNA degradation. Catalyzes the phosphorolysis of single-stranded polyribonucleotides processively in the 3'- to 5'-direction. This is Polyribonucleotide nucleotidyltransferase from Pelobacter propionicus (strain DSM 2379 / NBRC 103807 / OttBd1).